The primary structure comprises 321 residues: Peroxidase 27 (321 aa).

Positions Met1 to Ser23 are cleaved as a signal peptide. 4 cysteine pairs are disulfide-bonded: Cys35-Cys113, Cys68-Cys73, Cys119-Cys317, and Cys196-Cys228. His66 (proton acceptor) is an active-site residue. 5 residues coordinate Ca(2+): Asp67, Val70, Gly72, Asp74, and Ser76. Pro159 provides a ligand contact to substrate. A glycan (N-linked (GlcNAc...) asparagine) is linked at Asn164. His189 is a heme b binding site. Thr190 is a binding site for Ca(2+). Asn205 is a glycosylation site (N-linked (GlcNAc...) asparagine). 3 residues coordinate Ca(2+): Asp240, Ser243, and Asp248.

Belongs to the peroxidase family. Classical plant (class III) peroxidase subfamily. Heme b serves as cofactor. Requires Ca(2+) as cofactor. Expressed in the whole plant, but preferentially in roots and flowers.

Its subcellular location is the secreted. It catalyses the reaction 2 a phenolic donor + H2O2 = 2 a phenolic radical donor + 2 H2O. Its function is as follows. Removal of H(2)O(2), oxidation of toxic reductants, biosynthesis and degradation of lignin, suberization, auxin catabolism, response to environmental stresses such as wounding, pathogen attack and oxidative stress. These functions might be dependent on each isozyme/isoform in each plant tissue. This Arabidopsis thaliana (Mouse-ear cress) protein is Peroxidase 27 (PER27).